The primary structure comprises 505 residues: L-carnitine/gamma-butyrobetaine antiporter (505 aa).

The next 12 helical transmembrane spans lie at 10–30, 51–71, 92–112, 143–163, 195–215, 231–251, 263–283, 316–336, 347–367, 403–423, 446–466, and 475–495; these read IEPK…WLTV, WGWA…WLVF, IFMM…SIEI, GPLP…FFFV, FYLV…TPLV, LDAI…ACGL, SYLS…SFIM, WTVF…IFLA, LCFG…TVLG, LSTA…VTLI, LLVR…LLAL, and AIIA…LSFI.

This sequence belongs to the BCCT transporter (TC 2.A.15) family. CaiT subfamily. Homotrimer.

It is found in the cell inner membrane. It catalyses the reaction 4-(trimethylamino)butanoate(in) + (R)-carnitine(out) = 4-(trimethylamino)butanoate(out) + (R)-carnitine(in). It participates in amine and polyamine metabolism; carnitine metabolism. Functionally, catalyzes the exchange of L-carnitine for gamma-butyrobetaine. The sequence is that of L-carnitine/gamma-butyrobetaine antiporter from Salmonella typhi.